A 95-amino-acid polypeptide reads, in one-letter code: RING finger protein Z (95 aa).

Glycine 2 carries N-myristoyl glycine; by host lipidation. The RING-type; atypical zinc-finger motif lies at 38–74; sequence CKSCWFANRGLIACSDHYLCLNCLTRLRSQSQFCGIC. Positions 88 to 91 match the PTAP/PSAP motif motif; it reads PSAP.

It belongs to the arenaviridae Z protein family. In terms of assembly, interacts with protein NP; this interaction probably directs the encapsidated genome to budding sites. Interacts (via RING domain) with polymerase L; this interaction inhibits viral transcription and replication, Z partially blocks the product exit tunnel for the releasing nascent RNA product. Interacts with the glycoprotein complex; this interaction plays a role in virion budding. Interacts with host eIF4E; this interaction results in eIF4E reduced affinity for its substrate, the 5'-m7 G cap structure. Interacts (via late-budding domain) with host TSG101; this interaction is essential for budding and release of viral particles. Interacts with host RPLP0; this interaction may serve to load ribosome-like particles inside the virion. Interacts with host PML; this interaction induces PML bodies redistribution in the cytoplasm upon viral infection. In terms of processing, myristoylation is required for the role of RING finger protein Z in assembly and budding.

The protein resides in the virion. It is found in the host cytoplasm. The protein localises to the host perinuclear region. Its subcellular location is the host cell membrane. Functionally, plays a crucial role in virion assembly and budding. Expressed late in the virus life cycle, it acts as an inhibitor of viral transcription and RNA synthesis by interacting with the viral polymerase L. Presumably recruits the NP encapsidated genome to cellular membranes at budding sites via direct interaction with NP. Plays critical roles in the final steps of viral release by interacting with host TSG101, a member of the vacuolar protein-sorting pathway and using other cellular host proteins involved in vesicle formation pathway. The budding of the virus progeny occurs after association of protein Z with the viral glycoprotein complex SSP-GP1-GP2 at the cell periphery, step that requires myristoylation of protein Z. Also selectively represses protein production by associating with host eIF4E. In cell-based minigenome assay, has an inhibitory effect on the ribonucleoprotein machinery (vRNP), which is responsible for the replication and transcription of the viral genome. The sequence is that of RING finger protein Z from Pirital mammarenavirus (isolate Rat/Venezuela/VAV-488/1995) (PIRV).